The sequence spans 76 residues: Large ribosomal subunit protein bL28 (76 aa).

Belongs to the bacterial ribosomal protein bL28 family.

This is Large ribosomal subunit protein bL28 from Opitutus terrae (strain DSM 11246 / JCM 15787 / PB90-1).